Reading from the N-terminus, the 384-residue chain is Transcription factor 7 (384 aa).

Positions 1–16 (MPQLDSGGGGAGGGDD) are enriched in gly residues. The tract at residues 1–59 (MPQLDSGGGGAGGGDDLGAPDELLAFQDEGEEQDDKSRDSAAGPERDLAELKSSLVNES) is CTNNB1-binding. 3 disordered regions span residues 1–88 (MPQL…LGRE), 133–183 (PPSG…QKQV), and 337–384 (SARD…MTVL). A compositionally biased stretch (basic and acidic residues) spans 35–50 (DKSRDSAAGPERDLAE). Gly residues predominate over residues 62-78 (AAGGAGIPGVPGAGAGA). Positions 269–337 (IKKPLNAFML…LHMQLYPGWS (69 aa)) form a DNA-binding region, HMG box. The short motif at 344–348 (KKKRR) is the Nuclear localization signal element. Residues 352 to 370 (KHQESTTGGKRNAFGTYPE) show a composition bias toward basic and acidic residues. The segment covering 374–384 (APAPFLPMTVL) has biased composition (low complexity).

It belongs to the TCF/LEF family. Binds the armadillo repeat of CTNNB1 and forms a stable complex. Interacts with TLE5, TLE1, TLE2, TLE3 and TLE4. Interacts with MLLT11. Long isoform interacts (via N-terminus) with SOX13; inhibits WNT-mediated transcriptional activity. Interacts with DAZAP2. As to expression, predominantly expressed in T-cells. Also detected in proliferating intestinal epithelial cells and in the basal epithelial cells of mammary gland epithelium.

The protein localises to the nucleus. Functionally, transcriptional activator involved in T-cell lymphocyte differentiation. Necessary for the survival of CD4(+) CD8(+) immature thymocytes. Isoforms lacking the N-terminal CTNNB1 binding domain cannot fulfill this role. Binds to the T-lymphocyte-specific enhancer element (5'-WWCAAAG-3') found in the promoter of the CD3E gene. Represses expression of the T-cell receptor gamma gene in alpha-beta T-cell lineages. Required for the development of natural killer receptor-positive lymphoid tissue inducer T-cells. TLE1, TLE2, TLE3 and TLE4 repress transactivation mediated by TCF7 and CTNNB1. May also act as feedback transcriptional repressor of CTNNB1 and TCF7L2 target genes. In Homo sapiens (Human), this protein is Transcription factor 7.